A 160-amino-acid polypeptide reads, in one-letter code: Ureidoglycolate lyase (160 aa).

Belongs to the ureidoglycolate lyase family. In terms of assembly, homodimer. Ni(2+) is required as a cofactor.

It carries out the reaction (S)-ureidoglycolate = urea + glyoxylate. It participates in nitrogen metabolism; (S)-allantoin degradation. Functionally, catalyzes the catabolism of the allantoin degradation intermediate (S)-ureidoglycolate, generating urea and glyoxylate. Involved in the utilization of allantoin as nitrogen source. The chain is Ureidoglycolate lyase from Salmonella gallinarum (strain 287/91 / NCTC 13346).